A 457-amino-acid polypeptide reads, in one-letter code: Cysteine--tRNA ligase (457 aa).

A Zn(2+)-binding site is contributed by Cys-31. Residues 33–43 (PTVYNYAHIGN) carry the 'HIGH' region motif. Zn(2+) is bound by residues Cys-211, His-236, and Glu-240. The 'KMSKS' region signature appears at 269 to 273 (KMSKS). An ATP-binding site is contributed by Lys-272.

Belongs to the class-I aminoacyl-tRNA synthetase family. As to quaternary structure, monomer. Zn(2+) is required as a cofactor.

Its subcellular location is the cytoplasm. It carries out the reaction tRNA(Cys) + L-cysteine + ATP = L-cysteinyl-tRNA(Cys) + AMP + diphosphate. The polypeptide is Cysteine--tRNA ligase (Xanthomonas campestris pv. campestris (strain ATCC 33913 / DSM 3586 / NCPPB 528 / LMG 568 / P 25)).